Reading from the N-terminus, the 165-residue chain is uncharacterized protein (165 aa).

The segment at 68-107 (LEGAPEWAAPHPEEQRRSPPACSQHTPPLPSTPTGPPPCS) is disordered. Residues 94–107 (PPLPSTPTGPPPCS) show a composition bias toward pro residues.

This is an uncharacterized protein from Homo sapiens (Human).